A 34-amino-acid polypeptide reads, in one-letter code: uncharacterized protein (34 aa).

This is an uncharacterized protein from Escherichia coli (Bacteriophage T4).